Here is a 553-residue protein sequence, read N- to C-terminus: Dihydroxy-acid dehydratase (553 aa).

A Mg(2+)-binding site is contributed by D78. Residue C119 participates in [2Fe-2S] cluster binding. Residues D120 and K121 each coordinate Mg(2+). K121 bears the N6-carboxylysine mark. C191 provides a ligand contact to [2Fe-2S] cluster. E442 is a binding site for Mg(2+). S468 (proton acceptor) is an active-site residue.

This sequence belongs to the IlvD/Edd family. As to quaternary structure, homodimer. It depends on [2Fe-2S] cluster as a cofactor. The cofactor is Mg(2+).

It carries out the reaction (2R)-2,3-dihydroxy-3-methylbutanoate = 3-methyl-2-oxobutanoate + H2O. It catalyses the reaction (2R,3R)-2,3-dihydroxy-3-methylpentanoate = (S)-3-methyl-2-oxopentanoate + H2O. It participates in amino-acid biosynthesis; L-isoleucine biosynthesis; L-isoleucine from 2-oxobutanoate: step 3/4. The protein operates within amino-acid biosynthesis; L-valine biosynthesis; L-valine from pyruvate: step 3/4. Functionally, functions in the biosynthesis of branched-chain amino acids. Catalyzes the dehydration of (2R,3R)-2,3-dihydroxy-3-methylpentanoate (2,3-dihydroxy-3-methylvalerate) into 2-oxo-3-methylpentanoate (2-oxo-3-methylvalerate) and of (2R)-2,3-dihydroxy-3-methylbutanoate (2,3-dihydroxyisovalerate) into 2-oxo-3-methylbutanoate (2-oxoisovalerate), the penultimate precursor to L-isoleucine and L-valine, respectively. This is Dihydroxy-acid dehydratase from Carboxydothermus hydrogenoformans (strain ATCC BAA-161 / DSM 6008 / Z-2901).